Here is an 822-residue protein sequence, read N- to C-terminus: Probable alpha,alpha-trehalose-phosphate synthase [UDP-forming] 2 (822 aa).

Residues 12–479 form a glycosyltransferase region; sequence PRLLVVANRL…GLDFMSELNG (468 aa).

This sequence in the N-terminal section; belongs to the glycosyltransferase 20 family. It in the C-terminal section; belongs to the trehalose phosphatase family.

The enzyme catalyses D-glucose 6-phosphate + UDP-alpha-D-glucose = alpha,alpha-trehalose 6-phosphate + UDP + H(+). The chain is Probable alpha,alpha-trehalose-phosphate synthase [UDP-forming] 2 (TPS2) from Arabidopsis thaliana (Mouse-ear cress).